A 122-amino-acid polypeptide reads, in one-letter code: Large ribosomal subunit protein eL18 (122 aa).

This sequence belongs to the eukaryotic ribosomal protein eL18 family.

In Pyrobaculum aerophilum (strain ATCC 51768 / DSM 7523 / JCM 9630 / CIP 104966 / NBRC 100827 / IM2), this protein is Large ribosomal subunit protein eL18.